We begin with the raw amino-acid sequence, 65 residues long: Large ribosomal subunit protein bL35 (65 aa).

It belongs to the bacterial ribosomal protein bL35 family.

In Porphyromonas gingivalis (strain ATCC 33277 / DSM 20709 / CIP 103683 / JCM 12257 / NCTC 11834 / 2561), this protein is Large ribosomal subunit protein bL35.